The sequence spans 152 residues: Protein SprT-like (152 aa).

One can recognise a SprT-like domain in the interval 7 to 148 (QRLVEEVSLQ…GKCKGKLNLI (142 aa)). Residue His-67 participates in Zn(2+) binding. Residue Glu-68 is part of the active site. Zn(2+) is bound at residue His-71.

This sequence belongs to the SprT family. Zn(2+) is required as a cofactor.

It localises to the cytoplasm. In Bacillus cereus (strain 03BB102), this protein is Protein SprT-like.